Reading from the N-terminus, the 759-residue chain is Protein MEI2-like 3 (759 aa).

2 RRM domains span residues 166 to 239 and 251 to 324; these read RTLF…FSIP and GTLV…HSRP.

Probable RNA-binding protein that plays a role in meiosis and vegetative growth. The polypeptide is Protein MEI2-like 3 (ML3) (Arabidopsis thaliana (Mouse-ear cress)).